The chain runs to 510 residues: Probable serine/threonine-protein kinase 2 (510 aa).

The 254-residue stretch at 111–364 folds into the Protein kinase domain; that stretch reads YVLNKKIGKG…ALQALGHQWF (254 aa). ATP contacts are provided by residues 117–125 and Lys140; that span reads IGKGSFSTA. The Proton acceptor role is filled by Asp230. A disordered region spans residues 408 to 428; sequence NDDIYNNNNNNNQLDPNKNHK.

This sequence belongs to the protein kinase superfamily. Ser/Thr protein kinase family.

It is found in the membrane. The enzyme catalyses L-seryl-[protein] + ATP = O-phospho-L-seryl-[protein] + ADP + H(+). It catalyses the reaction L-threonyl-[protein] + ATP = O-phospho-L-threonyl-[protein] + ADP + H(+). This chain is Probable serine/threonine-protein kinase 2 (PK2), found in Plasmodium falciparum (isolate K1 / Thailand).